Reading from the N-terminus, the 517-residue chain is Carotenoid phi-ring synthase (517 aa).

The disordered stretch occupies residues 1-24 (MFARDSGRGHRHGRDRQAAVVPAP). Residues alanine 45, 64 to 65 (ER), arginine 72, tyrosine 99, aspartate 461, and methionine 472 contribute to the FAD site.

This sequence belongs to the carotenoid/retinoid oxidoreductase family. Requires FAD as cofactor.

The catalysed reaction is a carotenoid beta-end derivative + 2 A = a carotenoid phi-end derivative + 2 AH2. The protein operates within carotenoid biosynthesis. In terms of biological role, involved in the biosynthesis of isorenieratene, a carotenoid with aromatic end groups. Catalyzes the introduction of two additional double bonds into each ionone ring of beta-carotene to produce isorenieratene. The reaction includes an intramolecular methyl transfer from position C1 to position C2 of the ring. The sequence is that of Carotenoid phi-ring synthase from Streptomyces griseus.